A 190-amino-acid polypeptide reads, in one-letter code: Elongation factor P 2 (190 aa).

It belongs to the elongation factor P family.

It localises to the cytoplasm. The protein operates within protein biosynthesis; polypeptide chain elongation. Functionally, involved in peptide bond synthesis. Stimulates efficient translation and peptide-bond synthesis on native or reconstituted 70S ribosomes in vitro. Probably functions indirectly by altering the affinity of the ribosome for aminoacyl-tRNA, thus increasing their reactivity as acceptors for peptidyl transferase. The sequence is that of Elongation factor P 2 (efp2) from Chlamydia muridarum (strain MoPn / Nigg).